The primary structure comprises 538 residues: ATP synthase subunit beta, mitochondrial (538 aa).

G215–T222 contributes to the ATP binding site.

Belongs to the ATPase alpha/beta chains family. As to quaternary structure, subunit of the F-type ATPase which has 2 components, CF(1) - the catalytic core - and CF(0) - the membrane proton channel. Interacts (via N-terminus) with lov-1 (via PLAT domain). As to expression, expressed in three categories of adult male sensory neurons: tail ray B neurons, HOB hook neuron and head cephalic (CEM) neurons.

It is found in the cell projection. It localises to the cilium. The protein localises to the mitochondrion. Its subcellular location is the mitochondrion inner membrane. The enzyme catalyses ATP + H2O + 4 H(+)(in) = ADP + phosphate + 5 H(+)(out). Mitochondrial membrane ATP synthase (F(1)F(0) ATP synthase or Complex V) produces ATP from ADP in the presence of a proton gradient across the membrane which is generated by electron transport complexes of the respiratory chain. F-type ATPases consist of two structural domains, F(1) - containing the extramembraneous catalytic core, and F(0) - containing the membrane proton channel, linked together by a central stalk and a peripheral stalk. During catalysis, ATP synthesis in the catalytic domain of F(1) is coupled via a rotary mechanism of the central stalk subunits to proton translocation. Subunits alpha and beta form the catalytic core in F(1). Rotation of the central stalk against the surrounding subunits leads to hydrolysis of ATP in three separate catalytic sites on the beta subunits. Required during male mating behavior for the response to hermaphrodite contact, acting with lov-1 and pkd-2. May be involved in polycystin signaling. The chain is ATP synthase subunit beta, mitochondrial from Caenorhabditis elegans.